The chain runs to 198 residues: Na(+)-translocating NADH-quinone reductase subunit E (198 aa).

The next 6 helical transmembrane spans lie at 11-31, 39-59, 77-97, 110-130, 140-160, and 176-196; these read SIFI…FLAV, FGLG…NNLV, FLNF…LEMI, GIFL…SFMV, VVYG…LAGI, and LGIT…FSGV.

Belongs to the NqrDE/RnfAE family. As to quaternary structure, composed of six subunits; NqrA, NqrB, NqrC, NqrD, NqrE and NqrF.

It localises to the cell inner membrane. The catalysed reaction is a ubiquinone + n Na(+)(in) + NADH + H(+) = a ubiquinol + n Na(+)(out) + NAD(+). Functionally, NQR complex catalyzes the reduction of ubiquinone-1 to ubiquinol by two successive reactions, coupled with the transport of Na(+) ions from the cytoplasm to the periplasm. NqrA to NqrE are probably involved in the second step, the conversion of ubisemiquinone to ubiquinol. The protein is Na(+)-translocating NADH-quinone reductase subunit E of Vibrio anguillarum (Listonella anguillarum).